The following is a 495-amino-acid chain: UDP-glycosyltransferase 73C10 (495 aa).

Histidine 24 acts as the Proton acceptor in catalysis. Histidine 24 is a binding site for an anthocyanidin. The Charge relay role is filled by aspartate 129. UDP-alpha-D-glucose-binding residues include glutamine 358, histidine 373, tryptophan 376, asparagine 377, serine 378, and glutamate 381. Glycine 396 contributes to the an anthocyanidin binding site. UDP-alpha-D-glucose contacts are provided by aspartate 397 and glutamine 398.

The protein belongs to the UDP-glycosyltransferase family.

The enzyme catalyses oleanolate + UDP-alpha-D-glucose = oleanolate 3-O-beta-D-glucoside + UDP + H(+). Functionally, catalyzes the transfer of a glucose (Glc) moiety from UDP-Glc to the C-3 position of the oleanane sapogenins oleanolate and hederagenin, and to the C-28 carboxylic group of the lupane sapogenin betulinate. The monoglucosylated hederagenin 3-O-beta-D-glucoside is a feeding deterrent of the yellow-striped flea beetle (Phyllotreta nemorum). The polypeptide is UDP-glycosyltransferase 73C10 (Barbarea vulgaris (Yellow rocket)).